A 183-amino-acid chain; its full sequence is Beta-defensin 129 (183 aa).

The signal sequence occupies residues 1-19 (MKLLFPVFASLMLQYQVNT). Intrachain disulfides connect Cys27-Cys53, Cys34-Cys48, and Cys38-Cys54. Residues 141-183 (TATSTKSNTKESRDSATASPPPAPPPPNILPTPSLELEKAEEQ) form a disordered region. The segment covering 159–170 (SPPPAPPPPNIL) has biased composition (pro residues).

This sequence belongs to the beta-defensin family.

Its subcellular location is the secreted. Has antibacterial activity. The chain is Beta-defensin 129 (DEFB129) from Pongo pygmaeus (Bornean orangutan).